Here is a 349-residue protein sequence, read N- to C-terminus: Phosphoribosylformylglycinamidine cyclo-ligase (349 aa).

Belongs to the AIR synthase family.

It is found in the cytoplasm. The catalysed reaction is 2-formamido-N(1)-(5-O-phospho-beta-D-ribosyl)acetamidine + ATP = 5-amino-1-(5-phospho-beta-D-ribosyl)imidazole + ADP + phosphate + H(+). It participates in purine metabolism; IMP biosynthesis via de novo pathway; 5-amino-1-(5-phospho-D-ribosyl)imidazole from N(2)-formyl-N(1)-(5-phospho-D-ribosyl)glycinamide: step 2/2. The protein is Phosphoribosylformylglycinamidine cyclo-ligase of Lawsonia intracellularis (strain PHE/MN1-00).